A 693-amino-acid polypeptide reads, in one-letter code: DNA ligase (693 aa).

Residues 40-44 (DSEYD), 89-90 (SL), and glutamate 121 each bind NAD(+). Residue lysine 123 is the N6-AMP-lysine intermediate of the active site. Arginine 144, glutamate 179, lysine 295, and lysine 319 together coordinate NAD(+). Residues cysteine 413, cysteine 416, cysteine 431, and cysteine 437 each contribute to the Zn(2+) site. Residues 610-693 (REQNILTGKI…AFIKCLEKEV (84 aa)) form the BRCT domain.

Belongs to the NAD-dependent DNA ligase family. LigA subfamily. It depends on Mg(2+) as a cofactor. Mn(2+) is required as a cofactor.

It catalyses the reaction NAD(+) + (deoxyribonucleotide)n-3'-hydroxyl + 5'-phospho-(deoxyribonucleotide)m = (deoxyribonucleotide)n+m + AMP + beta-nicotinamide D-nucleotide.. Functionally, DNA ligase that catalyzes the formation of phosphodiester linkages between 5'-phosphoryl and 3'-hydroxyl groups in double-stranded DNA using NAD as a coenzyme and as the energy source for the reaction. It is essential for DNA replication and repair of damaged DNA. The protein is DNA ligase of Rickettsia typhi (strain ATCC VR-144 / Wilmington).